A 448-amino-acid polypeptide reads, in one-letter code: Antilisterial bacteriocin subtilosin biosynthesis protein AlbA (448 aa).

The Radical SAM core domain occupies 115 to 329 (FPMPLHATFE…EQHVIDEFKD (215 aa)). Cysteine 129, cysteine 133, cysteine 136, cysteine 408, cysteine 414, and cysteine 417 together coordinate [4Fe-4S] cluster.

It depends on [4Fe-4S] cluster as a cofactor.

It is found in the cytoplasm. In terms of biological role, catalyzes the formation of 3 thioether bonds during production of the sactipeptide subtilosin from SboA. In vitro the thioether bonds cannot be made in the absence of the SboA propeptide, suggesting this is the first reaction in subtilosin maturation. In vitro, in the absence of a second substrate, cleaves S-adenosyl-L-methionine into Met and 5'-dA. The sequence is that of Antilisterial bacteriocin subtilosin biosynthesis protein AlbA (albA) from Bacillus subtilis (strain 168).